Here is a 253-residue protein sequence, read N- to C-terminus: Low affinity immunoglobulin gamma Fc region receptor III-A (253 aa).

Positions 1–20 (MGQPLPPVALLLLVSASSRA) are cleaved as a signal peptide. Residues 21 to 207 (ADVPKALVLL…ISSSVLPWHQ (187 aa)) lie on the Extracellular side of the membrane. Ig-like C2-type domains are found at residues 24–90 (PKAL…YRCQ) and 99–189 (PVQL…VTIT). Disulfide bonds link C47/C89 and C128/C172. 4 N-linked (GlcNAc...) asparagine glycosylation sites follow: N56, N63, N165, and N180. The helical transmembrane segment at 208–226 (IAFCLVMGLLLAADTGLYF) threads the bilayer. Residues 227–253 (SVQRDLRSSQRARKEHTLGWSLGSQDK) lie on the Cytoplasmic side of the membrane.

Forms a heterooligomeric complex with ITAM-containing signaling subunits FCER1G. Interacts (via transmembrane domain) with signaling subunits; this interaction is a prerequisite for receptor complex expression on the cell surface and intracellular signal transduction. Binds the Fc region of antigen-complexed IgG.

Its subcellular location is the cell membrane. Receptor for the invariable Fc fragment of immunoglobulin gamma (IgG). Optimally activated upon binding of clustered antigen-IgG complexes displayed on cell surfaces, triggers lysis of antibody-coated cells, a process known as antibody-dependent cellular cytotoxicity (ADCC). Does not bind free monomeric IgG, thus avoiding inappropriate effector cell activation in the absence of antigenic trigger. Mediates IgG effector functions on natural killer (NK) cells. Binds antigen-IgG complexes generated upon infection and triggers NK cell-dependent cytokine production and degranulation to limit viral load and propagation. Fc-binding subunit that associates with FCER1G adapter to form functional signaling complexes. Following the engagement of antigen-IgG complexes, triggers phosphorylation of immunoreceptor tyrosine-based activation motif (ITAM)-containing adapters with subsequent activation of phosphatidylinositol 3-kinase signaling and sustained elevation of intracellular calcium that ultimately drive NK cell activation. Mediates enhanced ADCC in response to afucosylated IgGs. The chain is Low affinity immunoglobulin gamma Fc region receptor III-A from Oryctolagus cuniculus (Rabbit).